Consider the following 286-residue polypeptide: tRNA (guanine-N(1)-)-methyltransferase (286 aa).

S-adenosyl-L-methionine-binding positions include G116 and 140-145 (IGDYVL). The tract at residues 232–286 (DALPPGSLTPHEEALAAEARLHAGRSAETPPPAGAAGSQAEGPPGTSPSDAAVAH) is disordered.

The protein belongs to the RNA methyltransferase TrmD family. Homodimer.

The protein resides in the cytoplasm. The enzyme catalyses guanosine(37) in tRNA + S-adenosyl-L-methionine = N(1)-methylguanosine(37) in tRNA + S-adenosyl-L-homocysteine + H(+). Specifically methylates guanosine-37 in various tRNAs. This chain is tRNA (guanine-N(1)-)-methyltransferase, found in Acidothermus cellulolyticus (strain ATCC 43068 / DSM 8971 / 11B).